The primary structure comprises 335 residues: tRNA (guanine(6)-N2)-methyltransferase (335 aa).

Residues 47-150 (EALGLRLAHH…GEEAFLGVQL (104 aa)) form the THUMP domain. S-adenosyl-L-methionine-binding positions include 195 to 197 (SGT), 243 to 244 (DA), and Asn-260.

The protein belongs to the methyltransferase superfamily. Monomer in solution.

It is found in the cytoplasm. It catalyses the reaction guanosine(6) in tRNA + S-adenosyl-L-methionine = N(2)-methylguanosine(6) in tRNA + S-adenosyl-L-homocysteine + H(+). Functionally, S-adenosyl-L-methionine-dependent methyltransferase that catalyzes the methylation of the guanosine nucleotide at position 6 (m2G6) in tRNA(Phe). This is tRNA (guanine(6)-N2)-methyltransferase from Thermus thermophilus (strain ATCC BAA-163 / DSM 7039 / HB27).